The chain runs to 230 residues: Ribosomal RNA small subunit methyltransferase G (230 aa).

S-adenosyl-L-methionine contacts are provided by residues Gly74, Phe79, Ala124–Glu125, and Arg141.

Belongs to the methyltransferase superfamily. RNA methyltransferase RsmG family.

The protein localises to the cytoplasm. In terms of biological role, specifically methylates the N7 position of a guanine in 16S rRNA. This Acholeplasma laidlawii (strain PG-8A) protein is Ribosomal RNA small subunit methyltransferase G.